Consider the following 421-residue polypeptide: Glutamate-1-semialdehyde 2,1-aminomutase 1 (421 aa).

Residue Lys-258 is modified to N6-(pyridoxal phosphate)lysine.

It belongs to the class-III pyridoxal-phosphate-dependent aminotransferase family. HemL subfamily. Requires pyridoxal 5'-phosphate as cofactor.

It is found in the cytoplasm. The enzyme catalyses (S)-4-amino-5-oxopentanoate = 5-aminolevulinate. The protein operates within porphyrin-containing compound metabolism; protoporphyrin-IX biosynthesis; 5-aminolevulinate from L-glutamyl-tRNA(Glu): step 2/2. This chain is Glutamate-1-semialdehyde 2,1-aminomutase 1, found in Cenarchaeum symbiosum (strain A).